A 152-amino-acid polypeptide reads, in one-letter code: 3-hydroxyacyl-[acyl-carrier-protein] dehydratase FabZ (152 aa).

The active site involves His58.

Belongs to the thioester dehydratase family. FabZ subfamily.

The protein localises to the cytoplasm. The catalysed reaction is a (3R)-hydroxyacyl-[ACP] = a (2E)-enoyl-[ACP] + H2O. Functionally, involved in unsaturated fatty acids biosynthesis. Catalyzes the dehydration of short chain beta-hydroxyacyl-ACPs and long chain saturated and unsaturated beta-hydroxyacyl-ACPs. The polypeptide is 3-hydroxyacyl-[acyl-carrier-protein] dehydratase FabZ (Synechococcus sp. (strain RCC307)).